A 164-amino-acid polypeptide reads, in one-letter code: RNA pyrophosphohydrolase (164 aa).

The Nudix hydrolase domain occupies 8-153; sequence PYRSNVGAAL…KRPIYERLAR (146 aa). The short motif at 45–66 is the Nudix box element; it reads GGIDGDEDPAAAVLRELDEEIG.

This sequence belongs to the Nudix hydrolase family. RppH subfamily. A divalent metal cation is required as a cofactor.

Functionally, accelerates the degradation of transcripts by removing pyrophosphate from the 5'-end of triphosphorylated RNA, leading to a more labile monophosphorylated state that can stimulate subsequent ribonuclease cleavage. This is RNA pyrophosphohydrolase from Acidiphilium cryptum (strain JF-5).